We begin with the raw amino-acid sequence, 239 residues long: MSDTHDMTALVLFSGGQDSTTCLAWALDRFARIETIGFDYGQRHAIELDCRARLLDGLAQLRPEWAGKLGDGHTLEIPTLSAISETALTRDVAIEMGADGLPNTFVPGRNLVFLTFAAALAYRRGISHIVGGMCETDYSGYPDCRDETIKALQGALSLGMARPFELHTPLMWLSKAATWQLAYDLGGRDLVDLIRDQSHTCYLGERGARHDWGYGCGACPACDLRARGWHEYIAGSAQS.

13-23 (FSGGQDSTTCL) is a binding site for ATP. Cys201, Cys216, Cys219, and Cys222 together coordinate Zn(2+).

This sequence belongs to the QueC family. The cofactor is Zn(2+).

The enzyme catalyses 7-carboxy-7-deazaguanine + NH4(+) + ATP = 7-cyano-7-deazaguanine + ADP + phosphate + H2O + H(+). The protein operates within purine metabolism; 7-cyano-7-deazaguanine biosynthesis. Catalyzes the ATP-dependent conversion of 7-carboxy-7-deazaguanine (CDG) to 7-cyano-7-deazaguanine (preQ(0)). This chain is 7-cyano-7-deazaguanine synthase, found in Bradyrhizobium sp. (strain BTAi1 / ATCC BAA-1182).